Here is a 349-residue protein sequence, read N- to C-terminus: Septin-2 (349 aa).

One can recognise a Septin-type G domain in the interval lysine 33–arginine 305. The interval glycine 43–serine 50 is G1 motif. GTP-binding positions include glycine 43–serine 50, threonine 77, glycine 103, lysine 182–glutamate 190, glycine 240, and arginine 255. The tract at residues aspartate 100–glycine 103 is G3 motif. The G4 motif stretch occupies residues alanine 181 to aspartate 184. The segment at tryptophan 259–histidine 269 is important for dimerization.

This sequence belongs to the TRAFAC class TrmE-Era-EngA-EngB-Septin-like GTPase superfamily. Septin GTPase family. In terms of assembly, septins polymerize into heterooligomeric protein complexes that form filaments, and associate with cellular membranes, actin filaments and microtubules. GTPase activity is required for filament formation. Can form heterooligomers with other family members and form filaments.

The protein localises to the cytoplasm. It localises to the cytoskeleton. Its subcellular location is the spindle. It is found in the cleavage furrow. The protein resides in the midbody. The protein localises to the cell cortex. It localises to the cell projection. Its subcellular location is the cilium membrane. Its function is as follows. Filament-forming cytoskeletal GTPase. Required for normal organization of the actin cytoskeleton. Plays a role in the biogenesis of polarized columnar-shaped epithelium by maintaining polyglutamylated microtubules, thus facilitating efficient vesicle transport, and by impeding MAP4 binding to tubulin. Required for the progression through mitosis. Forms a scaffold at the midplane of the mitotic splindle required to maintain CENPE localization at kinetochores and consequently chromosome congression. During anaphase, may be required for chromosome segregation and spindle elongation. Plays a role in ciliogenesis and collective cell movements. In cilia, required for the integrity of the diffusion barrier at the base of the primary cilium that prevents diffusion of transmembrane proteins between the cilia and plasma membranes. In Gallus gallus (Chicken), this protein is Septin-2.